Here is a 1199-residue protein sequence, read N- to C-terminus: Metabotropic glutamate receptor 1 (1199 aa).

A signal peptide spans 1–18; it reads MVRLLLIFFPMIFLEMSI. The Extracellular portion of the chain corresponds to 19-592; it reads LPRMPDRKVL…VRYLEWSDIE (574 aa). A disulfide bond links Cys67 and Cys109. Tyr74 is a binding site for L-glutamate. The N-linked (GlcNAc...) asparagine glycan is linked to Asn98. Residues Ser165 and 186 to 188 contribute to the L-glutamate site; that span reads SAT. Asn223 is a glycosylation site (N-linked (GlcNAc...) asparagine). L-glutamate is bound at residue Tyr236. The cysteines at positions 289 and 291 are disulfide-linked. An L-glutamate-binding site is contributed by Asp318. An intrachain disulfide couples Cys378 to Cys394. Asn397 carries an N-linked (GlcNAc...) asparagine glycan. Lys409 provides a ligand contact to L-glutamate. Cysteines 432 and 439 form a disulfide. Residue Asn515 is glycosylated (N-linked (GlcNAc...) asparagine). A helical transmembrane segment spans residues 593 to 615; that stretch reads SIIAIAFSCLGILVTLFVTLIFV. Topologically, residues 616-629 are cytoplasmic; that stretch reads LYRDTPVVKSSSRE. A helical transmembrane segment spans residues 630-650; sequence LCYIILAGIFLGYVCPFTLIA. Topologically, residues 651–658 are extracellular; that stretch reads KPTTTSCY. A disulfide bridge links Cys657 with Cys746. A helical membrane pass occupies residues 659-680; it reads LQRLLVGLSSAMCYSALVTKTN. The Cytoplasmic segment spans residues 681–703; it reads RIARILAGSKKKICTRKPRFMSA. Residues 704-727 traverse the membrane as a helical segment; sequence WAQVIIASILISVQLTLVVTLIIM. Residues 728 to 750 lie on the Extracellular side of the membrane; the sequence is EPPMPILSYPSIKEVYLICNTSN. Residues 751 to 772 form a helical membrane-spanning segment; sequence LGVVAPVGYNGLLIMSCTYYAF. Topologically, residues 773 to 785 are cytoplasmic; it reads KTRNVPANFNEAK. A helical transmembrane segment spans residues 786–807; that stretch reads YIAFTMYTTCIIWLAFVPIYFG. Residues 808–815 lie on the Extracellular side of the membrane; the sequence is SNYKIITT. The chain crosses the membrane as a helical span at residues 816-840; that stretch reads CFAVSLSVTVALGCMFTPKMYIIIA. The Cytoplasmic portion of the chain corresponds to 841 to 1199; it reads KPERNVRSAF…RDYKQSSSTL (359 aa). Phosphoserine is present on Ser853. Thr871 is subject to Phosphothreonine. 3 disordered regions span residues 882-905, 959-1036, and 1056-1081; these read GAGNANSNGKSVSWSEPGGRQAPK, EEDN…QPKS, and HAVLAGPGTPGNSLRSLYPPPPPPQH. Residues 885-895 are compositionally biased toward polar residues; the sequence is NANSNGKSVSW. A phosphoserine mark is found at Ser894 and Ser969. Residues 1012 to 1033 show a composition bias toward pro residues; that stretch reads GLPPPLPQQQPQQPPPQQPPQQ. Ser1098 is subject to Phosphoserine. The segment at 1120 to 1177 is disordered; the sequence is EREGNTEEDELEEEEDLPTASKLTPEDSPALTPPSPFRDSVASGSSVPSSPVSESVLC. Over residues 1125–1136 the composition is skewed to acidic residues; that stretch reads TEEDELEEEEDL. A Phosphoserine modification is found at Ser1147. Residue Thr1151 is modified to Phosphothreonine. Ser1154 carries the phosphoserine modification. Residues 1159–1175 show a composition bias toward low complexity; it reads SVASGSSVPSSPVSESV.

Belongs to the G-protein coupled receptor 3 family. As to quaternary structure, homodimer; disulfide-linked. The PPXXF motif binds HOMER1, HOMER2 and HOMER3. Interacts with TAMALIN. Interacts with RYR1, RYR2, ITPR1, SHANK1 and SHANK3. Interacts with SIAH1. Predominantly expressed in cerebellar Purkinje cells, CA2-CA3 pyramidal cells of the hippocampus, and mitral and tufted cells of the olfactory bulb.

It is found in the cell membrane. The protein resides in the postsynaptic cell membrane. Its subcellular location is the cell projection. The protein localises to the dendrite. G-protein coupled receptor for glutamate. Ligand binding causes a conformation change that triggers signaling via guanine nucleotide-binding proteins (G proteins) and modulates the activity of down-stream effectors. Signaling activates a phosphatidylinositol-calcium second messenger system. May participate in the central action of glutamate in the CNS, such as long-term potentiation in the hippocampus and long-term depression in the cerebellum. May function in the light response in the retina. Induces GRID1 and GRID2 cation-channel activation via GNAQ-PLC-PKC pathway in dopaminergic neurons and cerebellar Purkinje cell, respectively. The protein is Metabotropic glutamate receptor 1 (Grm1) of Rattus norvegicus (Rat).